The chain runs to 295 residues: GATA transcription factor 18 (295 aa).

A GATA-type zinc finger spans residues 148 to 202 (SLLARRCANCDTTSTPLWRNGPRGPKSLCNACGIRFKKEERRTTAATGNTVVGAA).

It belongs to the type IV zinc-finger family. Class B subfamily. As to quaternary structure, homodimer. Forms heterodimers with GATA19, GATA22 and GATA21. Interacts with JAG. Binds to AGO10/PNH. In terms of tissue distribution, expressed in vegetative and inflorescence shoot apical meristems (SAMs), axillary (SAMs), floral meristems, developing ovules and stamens, vascular tissues, and in the embryo.

It localises to the nucleus. Functionally, transcriptional factor that specifically binds 5'-GATA-3' or 5'-GAT-3' motifs within gene promoters (including its own promoter and GATA21 promoter), thus regulating the expression of genes mostly involved in hormone responses and floral organ specification (including genes regulating hormones responses). Regulates both flower and shoot apical meristem (SAM) development, especially for establishing organ boundaries in shoots and flowers, probably by controlling the number and position of WUS-expressing cells. Coregulates, with AGO10/PNH, the shoot apical meristem (SAM) organization. Regulates floral organ development via the promotion of JAG and NPR5/BOP2 expression. Modulates cytokinin homeostasis in organ boundaries by regulating CKX3 expression. Involved in cell proliferation and differentiation. Required to position the inductive proembryo boundary via the regulation of gene expression and for early embryonic development. Together with GIF1/AN3, mediates cotyledon identity by preventing ectopic root formation through the repression of PLT1 expression. This is GATA transcription factor 18 from Arabidopsis thaliana (Mouse-ear cress).